The sequence spans 215 residues: Large ribosomal subunit protein uL3 (215 aa).

Residues 124–164 are disordered; sequence KRHGFSRGPMTHGSKNHREPGSTGAGTTPGRIYPGKRMAGR.

This sequence belongs to the universal ribosomal protein uL3 family. Part of the 50S ribosomal subunit. Forms a cluster with proteins L14 and L19.

One of the primary rRNA binding proteins, it binds directly near the 3'-end of the 23S rRNA, where it nucleates assembly of the 50S subunit. The chain is Large ribosomal subunit protein uL3 from Synechococcus sp. (strain RCC307).